Consider the following 700-residue polypeptide: Elongation factor G 1 (700 aa).

Positions 8 to 290 constitute a tr-type G domain; the sequence is QNYRNIGISA…AVIEFMPSPI (283 aa). Residues 17–24, 88–92, and 142–145 each bind GTP; these read AHIDAGKT, DTPGH, and NKMD.

The protein belongs to the TRAFAC class translation factor GTPase superfamily. Classic translation factor GTPase family. EF-G/EF-2 subfamily.

Its subcellular location is the cytoplasm. Its function is as follows. Catalyzes the GTP-dependent ribosomal translocation step during translation elongation. During this step, the ribosome changes from the pre-translocational (PRE) to the post-translocational (POST) state as the newly formed A-site-bound peptidyl-tRNA and P-site-bound deacylated tRNA move to the P and E sites, respectively. Catalyzes the coordinated movement of the two tRNA molecules, the mRNA and conformational changes in the ribosome. The protein is Elongation factor G 1 of Polaromonas sp. (strain JS666 / ATCC BAA-500).